The primary structure comprises 183 residues: Threonylcarbamoyl-AMP synthase (183 aa).

Residues 1 to 183 (MNITQIIEKL…LFTNQLVRQG (183 aa)) enclose the YrdC-like domain.

This sequence belongs to the SUA5 family. TsaC subfamily.

It localises to the cytoplasm. It carries out the reaction L-threonine + hydrogencarbonate + ATP = L-threonylcarbamoyladenylate + diphosphate + H2O. Its function is as follows. Required for the formation of a threonylcarbamoyl group on adenosine at position 37 (t(6)A37) in tRNAs that read codons beginning with adenine. Catalyzes the conversion of L-threonine, HCO(3)(-)/CO(2) and ATP to give threonylcarbamoyl-AMP (TC-AMP) as the acyladenylate intermediate, with the release of diphosphate. The sequence is that of Threonylcarbamoyl-AMP synthase from Histophilus somni (strain 2336) (Haemophilus somnus).